The sequence spans 244 residues: Ribosomal RNA small subunit methyltransferase G (244 aa).

S-adenosyl-L-methionine is bound by residues G84, F89, 107 to 109 (DST), 135 to 136 (AE), and R154.

It belongs to the methyltransferase superfamily. RNA methyltransferase RsmG family.

The protein resides in the cytoplasm. Functionally, specifically methylates the N7 position of a guanine in 16S rRNA. This chain is Ribosomal RNA small subunit methyltransferase G, found in Nostoc punctiforme (strain ATCC 29133 / PCC 73102).